A 533-amino-acid chain; its full sequence is Flavin-dependent halogenase gsfI (533 aa).

Gly-14, Gly-17, and Glu-47 together coordinate FAD. Chloride contacts are provided by Ser-331 and Gly-332.

The protein belongs to the flavin-dependent halogenase family.

The enzyme catalyses griseophenone C + FADH2 + chloride + O2 = griseophenone B + FAD + 2 H2O + H(+). It participates in secondary metabolite biosynthesis; terpenoid biosynthesis. Its function is as follows. Flavin-dependent halogenase; part of the gene cluster that mediates the biosynthesis of griseofulvin, an important antifungal drug that has been in use for a long time for treating dermatophyte infections. The first step of the pathway is the formation of the heptaketide backbone by gsfA which is initiated by priming with acetyl-CoA, followed by sequential condensations of 6 malonyl-CoA units. The resulting benzophenone can undergo a spontaneous dehydration to form norlichexanthone. However, the true precursor for the griseofulvin biosynthesis is not norlichexanthone, but the heptaketide benzophenone that is O-methylated at 3-OH by gsfB to produce griseophenone D which is further methylated at 9-OH by gsfC to yield griseophenone C. Griseophenone C is then substrate of halogenase gsfI which is responsible for the regio-specific chlorination at the C13 position to form griseophenone B. The cytochrome P450 gsfF catalyzes the coupling of orcinol and phloroglucinol rings in griseophenone B to form desmethyl-dehydrogriseofulvin A which is further methylated at 5-OH by gsfD to yield dehydrogriseofulvin. Finally, gsfE performs stereospecific reduction of enone 18 of dehydrogriseofulvin to afford the final product griseofulvin. The sequence is that of Flavin-dependent halogenase gsfI from Penicillium aethiopicum.